We begin with the raw amino-acid sequence, 106 residues long: uncharacterized protein (106 aa).

An N-terminal signal peptide occupies residues 1-31; sequence MKKKTKIILSLLAALIVILIVLPVLSPVVFT.

This is an uncharacterized protein from Bacillus subtilis (strain 168).